We begin with the raw amino-acid sequence, 393 residues long: 26S proteasome regulatory subunit 10B (393 aa).

Position 178 to 185 (178 to 185) interacts with ATP; sequence GPPGTGKT.

It belongs to the AAA ATPase family.

The protein resides in the cytoplasm. Its subcellular location is the nucleus. Functionally, the 26S proteasome is involved in the ATP-dependent degradation of ubiquitinated proteins. The regulatory (or ATPase) complex confers ATP dependency and substrate specificity to the 26S complex. The sequence is that of 26S proteasome regulatory subunit 10B (psmC6) from Dictyostelium discoideum (Social amoeba).